Consider the following 583-residue polypeptide: Proteasome-associated ATPase (583 aa).

Positions 2 to 90 (ASREDRDAAN…REEVDRLAQP (89 aa)) form a coiled coil. Residue 271 to 276 (GCGKTL) coordinates ATP. The segment at 582–583 (YL) is docks into pockets in the proteasome alpha-ring.

This sequence belongs to the AAA ATPase family. In terms of assembly, homohexamer. Assembles into a hexameric ring structure that caps the 20S proteasome core. Strongly interacts with the prokaryotic ubiquitin-like protein Pup through a hydrophobic interface; the interacting region of ARC lies in its N-terminal coiled-coil domain. There is one Pup binding site per ARC hexamer ring. Upon ATP-binding, the C-terminus of ARC interacts with the alpha-rings of the proteasome core, possibly by binding to the intersubunit pockets.

The protein operates within protein degradation; proteasomal Pup-dependent pathway. Functionally, ATPase which is responsible for recognizing, binding, unfolding and translocation of pupylated proteins into the bacterial 20S proteasome core particle. May be essential for opening the gate of the 20S proteasome via an interaction with its C-terminus, thereby allowing substrate entry and access to the site of proteolysis. Thus, the C-termini of the proteasomal ATPase may function like a 'key in a lock' to induce gate opening and therefore regulate proteolysis. The sequence is that of Proteasome-associated ATPase from Acidothermus cellulolyticus (strain ATCC 43068 / DSM 8971 / 11B).